The chain runs to 177 residues: Large ribosomal subunit protein uL6 (177 aa).

This sequence belongs to the universal ribosomal protein uL6 family. Part of the 50S ribosomal subunit.

In terms of biological role, this protein binds to the 23S rRNA, and is important in its secondary structure. It is located near the subunit interface in the base of the L7/L12 stalk, and near the tRNA binding site of the peptidyltransferase center. In Bordetella bronchiseptica (strain ATCC BAA-588 / NCTC 13252 / RB50) (Alcaligenes bronchisepticus), this protein is Large ribosomal subunit protein uL6.